The primary structure comprises 274 residues: Thiamine kinase (274 aa).

Belongs to the thiamine kinase family.

It carries out the reaction thiamine + ATP = thiamine phosphate + ADP + H(+). The protein operates within cofactor biosynthesis; thiamine diphosphate biosynthesis; thiamine phosphate from thiamine: step 1/1. Functionally, catalyzes the ATP-dependent phosphorylation of thiamine to thiamine phosphate. Is involved in thiamine salvage. This chain is Thiamine kinase, found in Salmonella choleraesuis (strain SC-B67).